Reading from the N-terminus, the 335-residue chain is Hsp90 co-chaperone Cdc37-like 1 (335 aa).

Positions 1 to 11 (MEQPWPPPGPW) are enriched in pro residues. The tract at residues 1–42 (MEQPWPPPGPWSFPRTGGETEEESDLDVSPSSSHYSPVPDGG) is disordered. A self-association region spans residues 2-170 (EQPWPPPGPW…YEQKIRHFGM (169 aa)). Positions 27–40 (DVSPSSSHYSPVPD) are enriched in low complexity. Phosphoserine is present on residues Ser32 and Ser88. Residues 84-120 (HNSESLDQEHAKAQTAVSELRQREEEWRQKEEALVQR) are a coiled coil. The interval 147 to 276 (KTEDEDKSQS…ARVRLYAQSQ (130 aa)) is self-association and interaction with Hsp90. An interaction with Hsp70 region spans residues 266–335 (KARVRLYAQS…EDDDRMMDTV (70 aa)). Residues 277 to 335 (SFAPVTVENHAPHSGVGCIGSAEPLPQNPDSLQCCPPAPLCSVDSVVHKEDDDRMMDTV) form a required for interaction with STIP1 region.

The protein belongs to the CDC37 family. Self-associates. Forms complexes with Hsp70 and Hsp90. Interacts with CDC37, FKBP4, PPID and STIP1.

It localises to the cytoplasm. Functionally, co-chaperone that binds to numerous proteins and promotes their interaction with Hsp70 and Hsp90. The polypeptide is Hsp90 co-chaperone Cdc37-like 1 (Cdc37l1) (Rattus norvegicus (Rat)).